Here is a 468-residue protein sequence, read N- to C-terminus: Probable Xaa-Pro aminopeptidase pepP (468 aa).

Positions 264, 275, 398, and 438 each coordinate Mn(2+).

Belongs to the peptidase M24B family. Requires Mn(2+) as cofactor.

The enzyme catalyses Release of any N-terminal amino acid, including proline, that is linked to proline, even from a dipeptide or tripeptide.. Its function is as follows. Catalyzes the removal of a penultimate prolyl residue from the N-termini of peptides. This Talaromyces stipitatus (strain ATCC 10500 / CBS 375.48 / QM 6759 / NRRL 1006) (Penicillium stipitatum) protein is Probable Xaa-Pro aminopeptidase pepP (pepP).